The chain runs to 1063 residues: Unconventional myosin-Ic (1063 aa).

The residue at position 1 (methionine 1) is an N-acetylmethionine. A Phosphoserine modification is found at threonine 10. In terms of domain architecture, Myosin motor spans 47 to 731 (GVQDFVLLEN…TLFATEDSLE (685 aa)). Residues asparagine 88, tyrosine 96, 139 to 148 (SGESGAGKTE), and 192 to 196 (NDNSS) each bind ATP. N6-methyllysine is present on lysine 383. A Phosphoserine modification is found at serine 408. Lysine 486 bears the N6-acetyllysine mark. Position 536 is a phosphoserine (serine 536). The tract at residues 608–630 (LLQLVEILRSKEPAYIRCIKPND) is actin-binding. 2 consecutive IQ domains span residues 734 to 757 (RQSL…FLRV) and 758 to 786 (KRSA…AAQT). A phosphoserine mark is found at serine 864 and serine 1041. Residues 885-1059 (KDNYPQSVPR…NGHLAVVAPR (175 aa)) enclose the TH1 domain.

The protein belongs to the TRAFAC class myosin-kinesin ATPase superfamily. Myosin family. Interacts (via its IQ motifs) with CABP1 and CIB1; the interaction with CABP1 and CIB1 is calcium-dependent. Interacts (via tail domain) with PLEKHB1 (via PH domain); the interaction is not affected by the presence or absence of calcium and CALM. Interacts with POLR1A. Interacts with POLR2A. Component of the B-WICH complex, at least composed of SMARCA5/SNF2H, BAZ1B/WSTF, SF3B1, DEK, MYO1C, ERCC6, MYBBP1A and DDX21. Interacts (via its IQ motifs) with CALM; this precludes interaction with YWHAB. Interacts with YWHAB; this precludes interaction with CALM. Interacts with RPS6. Interacts with actin. Interacts with LLPH. Interacts with GLUT4. Interacts (via its IQ motifs) with SH3BGRL3; the interaction is dependent on calcium and takes place at membrane ruffles. In terms of processing, isoform 2 contains a N-acetylmethionine at position 1. In terms of tissue distribution, isoform 3 is expressed in small intestine, pancreas, brain, kidney, skin, heart muscle, testis, striated muscle, spleen, liver and lung (at protein level). Expressed in brain, testis, adrenal glands, thymus, spleen, kidney, lung, heart, cochlea and vestibule. Expressed in sensory hair cells of the inner ear. Expressed in adipocytes.

The protein resides in the cytoplasm. Its subcellular location is the nucleus. It localises to the cell cortex. The protein localises to the cell projection. It is found in the stereocilium membrane. The protein resides in the cytoplasmic vesicle. Its subcellular location is the ruffle membrane. It localises to the nucleolus. The protein localises to the nucleoplasm. Functionally, myosins are actin-based motor molecules with ATPase activity. Unconventional myosins serve in intracellular movements. Their highly divergent tails bind to membranous compartments, which then are moved relative to actin filaments. Involved in glucose transporter recycling in response to insulin by regulating movement of intracellular GLUT4-containing vesicles to the plasma membrane. Component of the hair cell's (the sensory cells of the inner ear) adaptation-motor complex. Acts as a mediator of adaptation of mechanoelectrical transduction in stereocilia of vestibular hair cells. Binds phosphoinositides and links the actin cytoskeleton to cellular membranes. In terms of biological role, involved in regulation of transcription. Associated with transcriptional active ribosomal genes. Appears to cooperate with the WICH chromatin-remodeling complex to facilitate transcription. Necessary for the formation of the first phosphodiester bond during transcription initiation. The protein is Unconventional myosin-Ic (Myo1c) of Mus musculus (Mouse).